The following is a 123-amino-acid chain: Protein crumbs homolog 3 (123 aa).

The first 26 residues, 1–26 (MASPGLGLLLALGLPLLPARWGRAWG), serve as a signal peptide directing secretion. Residues 27–59 (QTLDPHVNENGTITPSAPGSGSNGALSQEAITA) are Extracellular-facing. A glycan (N-linked (GlcNAc...) asparagine) is linked at Asn36. The chain crosses the membrane as a helical span at residues 60-80 (IIVVFSLLAAVLLAVGLVLLL). Residues 81 to 120 (RKLREKRQTQGTYRPSSEEQFNHAAEARAPQDSKETVRGC) lie on the Cytoplasmic side of the membrane. Residues 87–123 (RQTQGTYRPSSEEQFNHAAEARAPQDSKETVRGCLPI) form a disordered region. Residues 96–117 (SSEEQFNHAAEARAPQDSKETV) are compositionally biased toward basic and acidic residues. The PDZ-binding motif lies at 119 to 123 (GCLPI).

Component of a complex composed of CRB3, PALS1 and PATJ. Interacts (via C-terminus) with PALS1 (via PDZ domain). Interacts with PARD6A. Interacts (via intracellular domain) with EPB41L5. Interacts with WDR83.

It localises to the apical cell membrane. The protein resides in the cell junction. Its subcellular location is the tight junction. Its function is as follows. Involved in the establishment of cell polarity in mammalian epithelial cells. Regulates the morphogenesis of tight junctions. Involved in promoting phosphorylation and cytoplasmic retention of transcriptional coactivators YAP1 and WWTR1/TAZ which leads to suppression of TGFB1-dependent transcription of target genes such as CCN2/CTGF, SERPINE1/PAI1, SNAI1/SNAIL1 and SMAD7. The polypeptide is Protein crumbs homolog 3 (Canis lupus familiaris (Dog)).